We begin with the raw amino-acid sequence, 156 residues long: Ribosomally synthesized cyclic peptide victorin precursosr vicA1 (156 aa).

The signal sequence occupies residues 1-21; the sequence is MVRITALMSGSILLFALQALA. 7 propeptides span residues 22–36, 43–55, 62–74, 81–93, 100–112, 119–131, and 138–150; these read MPVE…AEKR and KRGE…EEKR.

In terms of processing, vicA1 is processed by several endopeptidases including kexin proteases as well as the cluster-specific peptidases vicP1 and vicP2 to produce 7 identical copies of the hexapeptide Gly-Leu-Lys-Leu-Ala-Phe, that are further modified to yield victorins. After being excised from the precursor peptide, the core peptides are cyclized and modified post-translationally by enzymes encoded within the gene cluster. The ustYa family protein vicYb is required for the formation of the macrocycle in victorin and the copper amine oxidases (CAOs) vicK1 and vicK2 are responsible for converting victorin to the active form by oxidizing the N-terminal glycyl residue in the peptides to glyoxylate. Relaxed substrate specificity of enzymes in the victorin biosynthetic pathway results in a metabolic grid that produces a set of analogs including victorinines B, C, E or HV-toxin M.

It functions in the pathway mycotoxin biosynthesis. Ribosomally synthesized cyclic peptide victorin precursor, part of the gene cluster that mediates the biosynthesis of the secondary metabolite victorin, the molecular basis for Victoria blight of oats. The vicA1 translated product contains a 7-fold repeated peptide embedding the hexapeptide Gly-Leu-Lys-Leu-Ala-Phe, that is converted into the cyclic victorin. In Bipolaris victoriae (strain FI3) (Victoria blight of oats agent), this protein is Ribosomally synthesized cyclic peptide victorin precursosr vicA1.